Consider the following 240-residue polypeptide: Putative N-acetylmannosamine-6-phosphate 2-epimerase (240 aa).

The protein belongs to the NanE family.

The catalysed reaction is an N-acyl-D-glucosamine 6-phosphate = an N-acyl-D-mannosamine 6-phosphate. It functions in the pathway amino-sugar metabolism; N-acetylneuraminate degradation; D-fructose 6-phosphate from N-acetylneuraminate: step 3/5. In terms of biological role, converts N-acetylmannosamine-6-phosphate (ManNAc-6-P) to N-acetylglucosamine-6-phosphate (GlcNAc-6-P). This is Putative N-acetylmannosamine-6-phosphate 2-epimerase from Vibrio cholerae serotype O1 (strain ATCC 39315 / El Tor Inaba N16961).